The chain runs to 469 residues: Chromosomal replication initiator protein DnaA (469 aa).

The tract at residues 1–83 (MSEWDYKIFW…KKISIDFIIK (83 aa)) is domain I, interacts with DnaA modulators. The tract at residues 83–128 (KPNTSEDLSKAENEGGNDKKEDAAKPSSAESKKKSVKTEGGRGQHP) is domain II. A disordered region spans residues 89-131 (DLSKAENEGGNDKKEDAAKPSSAESKKKSVKTEGGRGQHPDLR). A domain III, AAA+ region region spans residues 129 to 344 (DLRPEYNFED…AALTKLIAYT (216 aa)). Residues glycine 173, glycine 175, lysine 176, and threonine 177 each contribute to the ATP site. The interval 345 to 469 (ELTKKTMDEA…RNTIKENTNK (125 aa)) is domain IV, binds dsDNA.

It belongs to the DnaA family. Oligomerizes as a right-handed, spiral filament on DNA at oriC.

The protein resides in the cytoplasm. Its function is as follows. Plays an essential role in the initiation and regulation of chromosomal replication. ATP-DnaA binds to the origin of replication (oriC) to initiate formation of the DNA replication initiation complex once per cell cycle. Binds the DnaA box (a 9 base pair repeat at the origin) and separates the double-stranded (ds)DNA. Forms a right-handed helical filament on oriC DNA; dsDNA binds to the exterior of the filament while single-stranded (ss)DNA is stabiized in the filament's interior. The ATP-DnaA-oriC complex binds and stabilizes one strand of the AT-rich DNA unwinding element (DUE), permitting loading of DNA polymerase. After initiation quickly degrades to an ADP-DnaA complex that is not apt for DNA replication. Binds acidic phospholipids. The polypeptide is Chromosomal replication initiator protein DnaA (Treponema denticola (strain ATCC 35405 / DSM 14222 / CIP 103919 / JCM 8153 / KCTC 15104)).